Reading from the N-terminus, the 151-residue chain is Transcriptional repressor NrdR (151 aa).

Positions 1-21 (MRCPFCGEADTQVKDSRPTED) are disordered. Residues 3 to 34 (CPFCGEADTQVKDSRPTEDGAAIRRRRFCPQC) fold into a zinc finger. Basic and acidic residues predominate over residues 11-21 (TQVKDSRPTED). An ATP-cone domain is found at 49–139 (LVVVKADQRR…VYRDFREAKD (91 aa)).

The protein belongs to the NrdR family. It depends on Zn(2+) as a cofactor.

Its function is as follows. Negatively regulates transcription of bacterial ribonucleotide reductase nrd genes and operons by binding to NrdR-boxes. The protein is Transcriptional repressor NrdR of Acidiphilium cryptum (strain JF-5).